The primary structure comprises 223 residues: MPSLSHESDSITLAADADERPLALRIAQALDAMREGRPVVLLDDDDRENEADLILAAECLTPSNMAMMIRECSGIVCLCLTTDKVRQLGLRPMVENNRSQYGTAFTVSIEAREGVTTGVSAVDRITTIRAAIAKDAGTDAVVSPGHVFPLVAVDGGVLVRRGHTEGSVELARMAGLSPAAVLCELMNPDGTMARRPEALSFAEMYRLPILTIADLVAWREIHG.

D-ribulose 5-phosphate-binding positions include 47–48, Asp52, 160–164, and Glu184; these read RE and RRGHT. Mg(2+) is bound at residue Glu48. His163 serves as a coordination point for Mg(2+).

Belongs to the DHBP synthase family. Homodimer. The cofactor is Mg(2+). Mn(2+) serves as cofactor.

It catalyses the reaction D-ribulose 5-phosphate = (2S)-2-hydroxy-3-oxobutyl phosphate + formate + H(+). Its pathway is cofactor biosynthesis; riboflavin biosynthesis; 2-hydroxy-3-oxobutyl phosphate from D-ribulose 5-phosphate: step 1/1. Catalyzes the conversion of D-ribulose 5-phosphate to formate and 3,4-dihydroxy-2-butanone 4-phosphate. This chain is 3,4-dihydroxy-2-butanone 4-phosphate synthase, found in Cupriavidus pinatubonensis (strain JMP 134 / LMG 1197) (Cupriavidus necator (strain JMP 134)).